The following is a 501-amino-acid chain: MDVFGDEAFNVPDSTDWLGTPLACLMPVEQAFRCHVCKDFYDSPMLTSCNHTFCSLCIRRCLSVDSKCPLCRATDQESKLRGNWALREAVEAFKNSRKVLLEFARTPPTIQAILPDQAGPSSPSKRKATEMEGPKEEDPESKRPRRSTRSTRARAAELTAAILQEEQDTTPSADPDYVDQPPDDGLVACPICLTRMKEQQVDRHLDTSCPGSPQAASKRRPIPAQTPQPSTFPSFNTRLTSQTNQKPPERLPALAYSMLRDTALRKKLSELGLSTHGSRQLLEKRHKEWITLWNANCDSSRPKKRSELLRDLDEWERTVGNPGTAAGGGGGQQGLGLMARAQATGAQIKDKEFDGKAWATRYGGSFGDLIKQARQGIKRQTLDGNGEKADTKGGGGGEDVGPAELPTLQAREGESSAAPTRMDIVPPSSPPRPGQVDDADTEHDGQAPGKDAIAEDTAMREQVIPGTPDKERQWETSQQQQPPIPGDAQLSGMKKPNPETC.

Residues 34–72 (CHVCKDFYDSPMLTSCNHTFCSLCIRRCLSVDSKCPLCR) form an RING-type zinc finger. A disordered region spans residues 111 to 154 (QAILPDQAGPSSPSKRKATEMEGPKEEDPESKRPRRSTRSTRAR). Residues 127-142 (KATEMEGPKEEDPESK) show a composition bias toward basic and acidic residues. The span at 143–152 (RPRRSTRSTR) shows a compositional bias: basic residues. Residues 186 to 214 (LVACPICLTRMKEQQVDRHLDTSCPGSPQ) form a UBZ4-type zinc finger. Positions 189, 192, 204, and 209 each coordinate Zn(2+). Positions 203-250 (RHLDTSCPGSPQAASKRRPIPAQTPQPSTFPSFNTRLTSQTNQKPPER) are disordered. The segment covering 225 to 246 (QTPQPSTFPSFNTRLTSQTNQK) has biased composition (polar residues). Positions 256–290 (YSMLRDTALRKKLSELGLSTHGSRQLLEKRHKEWI) constitute an SAP domain. Positions 377–501 (IKRQTLDGNG…GMKKPNPETC (125 aa)) are disordered.

This sequence belongs to the RAD18 family. As to quaternary structure, interacts with E2 mus-8/ubc2, forming a complex with ubiquitin ligase activity.

The protein localises to the nucleus. The catalysed reaction is S-ubiquitinyl-[E2 ubiquitin-conjugating enzyme]-L-cysteine + [acceptor protein]-L-lysine = [E2 ubiquitin-conjugating enzyme]-L-cysteine + N(6)-ubiquitinyl-[acceptor protein]-L-lysine.. It functions in the pathway protein modification; protein ubiquitination. In terms of biological role, E3 RING-finger protein, member of the UBC2/RAD6 epistasis group. Associates to the E2 ubiquitin conjugating enzyme mus-8/ubc2 to form the mus-8/ubc2-uvs-2/rad18 ubiquitin ligase complex involved in postreplicative repair (PRR) of damaged DNA. In Neurospora crassa (strain ATCC 24698 / 74-OR23-1A / CBS 708.71 / DSM 1257 / FGSC 987), this protein is Postreplication repair E3 ubiquitin-protein ligase rad18 (uvs-2).